A 123-amino-acid chain; its full sequence is Holo-[acyl-carrier-protein] synthase (123 aa).

Positions 7 and 56 each coordinate Mg(2+).

This sequence belongs to the P-Pant transferase superfamily. AcpS family. The cofactor is Mg(2+).

It is found in the cytoplasm. The catalysed reaction is apo-[ACP] + CoA = holo-[ACP] + adenosine 3',5'-bisphosphate + H(+). Functionally, transfers the 4'-phosphopantetheine moiety from coenzyme A to a Ser of acyl-carrier-protein. This Carboxydothermus hydrogenoformans (strain ATCC BAA-161 / DSM 6008 / Z-2901) protein is Holo-[acyl-carrier-protein] synthase.